The sequence spans 204 residues: Ribosomal RNA small subunit methyltransferase G (204 aa).

S-adenosyl-L-methionine-binding positions include Gly-69, Phe-74, 123–124, and Arg-137; that span reads IE.

It belongs to the methyltransferase superfamily. RNA methyltransferase RsmG family.

It is found in the cytoplasm. The enzyme catalyses guanosine(527) in 16S rRNA + S-adenosyl-L-methionine = N(7)-methylguanosine(527) in 16S rRNA + S-adenosyl-L-homocysteine. Functionally, specifically methylates the N7 position of guanine in position 527 of 16S rRNA. This Ruegeria pomeroyi (strain ATCC 700808 / DSM 15171 / DSS-3) (Silicibacter pomeroyi) protein is Ribosomal RNA small subunit methyltransferase G.